Here is a 739-residue protein sequence, read N- to C-terminus: Sulfate transporter (739 aa).

The segment at 1 to 27 (MSSESKEQHNVSPRDSAEGNDSYPSGI) is disordered. Residues S12 and S16 each carry the phosphoserine modification. A run of 2 helical transmembrane segments spans residues 112–132 (VMSGLIVGILLVPQSIAYSLL) and 137–157 (PVYGLYTSFFASIIYFLLGTS). N199 and N205 each carry an N-linked (GlcNAc...) asparagine glycan. 2 consecutive transmembrane segments (helical) span residues 219–239 (IMVGSTVTFIAGVYQVAMGFF) and 242–262 (GFVSVYLSDALLSGFVTGASF). The N-linked (GlcNAc...) asparagine glycan is linked to N357. 4 consecutive transmembrane segments (helical) span residues 378–398 (LIPSVAVDAIAISIIGFAITV), 420–440 (AIGFCNIIPSFFHCFTTSAAL), 455–475 (LSGVVTALVLLLVLLVIAPLF), and 524–544 (LLSTEIGLLVGVCFSIFCVIL). Residues 568–719 (AYKNLQIKPG…YSVYEAMAFA (152 aa)) form the STAS domain.

The protein belongs to the SLC26A/SulP transporter (TC 2.A.53) family. N-glycosylated. In terms of tissue distribution, ubiquitously expressed.

Its subcellular location is the cell membrane. It localises to the apical cell membrane. The enzyme catalyses oxalate(in) + sulfate(out) = oxalate(out) + sulfate(in). It catalyses the reaction sulfate(out) + 2 chloride(in) = sulfate(in) + 2 chloride(out). The catalysed reaction is oxalate(out) + 2 chloride(in) = oxalate(in) + 2 chloride(out). It carries out the reaction bromide(in) + chloride(out) = bromide(out) + chloride(in). The enzyme catalyses nitrate(in) + chloride(out) = nitrate(out) + chloride(in). It catalyses the reaction iodide(in) + chloride(out) = iodide(out) + chloride(in). With respect to regulation, an extracellular acidic pH inhibits chloride-sulfate and chloride-oxalate exchange activity whereas an intracellular acidic pH activates chloride-sulfate exchange with no effect on chloride-oxalate exchange activity. Its function is as follows. Sulfate transporter which mediates sulfate uptake into chondrocytes in order to maintain adequate sulfation of proteoglycans which is needed for cartilage development. Mediates electroneutral anion exchange of sulfate ions for oxalate ions and of sulfate and oxalate ions for chloride ions. Mediates exchange of sulfate and oxalate ions for hydroxyl ions and of chloride ions for bromide, iodide and nitrate ions. The coupling of sulfate transport to both hydroxyl and chloride ions likely serves to ensure transport at both acidic pH when most sulfate uptake is mediated by sulfate-hydroxide exchange and alkaline pH when most sulfate uptake is mediated by sulfate-chloride exchange. Essential for chondrocyte proliferation, differentiation and cell size expansion. The polypeptide is Sulfate transporter (SLC26A2) (Homo sapiens (Human)).